The sequence spans 171 residues: Endoribonuclease YbeY (171 aa).

Positions 126, 130, and 136 each coordinate Zn(2+).

Belongs to the endoribonuclease YbeY family. Zn(2+) is required as a cofactor.

The protein resides in the cytoplasm. Its function is as follows. Single strand-specific metallo-endoribonuclease involved in late-stage 70S ribosome quality control and in maturation of the 3' terminus of the 16S rRNA. The sequence is that of Endoribonuclease YbeY from Rhizobium etli (strain ATCC 51251 / DSM 11541 / JCM 21823 / NBRC 15573 / CFN 42).